A 119-amino-acid polypeptide reads, in one-letter code: Non-specific lipid-transfer protein 3 (119 aa).

Positions Met1–Ala24 are cleaved as a signal peptide. Disulfide bonds link Cys28-Cys77, Cys38-Cys54, Cys55-Cys100, and Cys75-Cys114.

The protein belongs to the plant LTP family. Expressed in roots, stem, leaves and tendrils of the mature plant.

In terms of biological role, plant non-specific lipid-transfer proteins transfer phospholipids as well as galactolipids across membranes. May play a role in wax or cutin deposition in the cell walls of expanding epidermal cells and certain secretory tissues. The polypeptide is Non-specific lipid-transfer protein 3 (Pisum sativum (Garden pea)).